Here is a 264-residue protein sequence, read N- to C-terminus: MKQYIKLIKKIIRVGNQKKDRTGTGTLSIFGYNMKFDLKKGFPLLTTKKCHIASIIYELLWFLKGDTNIAYLNENKISIWNNWANESGDVGPIYGKQWRNWSTPEGHEIDQIKNVLIQLKKNPDSRRMLVSSWNVGDIDKMRLPPCHVLFQFYVFNNTLSCQLYQRSCDVFLGLPFNIASYSILIHMIAQQCDLKVGDFLWTGGDVHLYNNHIELAKKQILRIPRTLPKLTILKKPQSLFQYCFEDFKIIGYHPYPAIKGKISI.

A dUMP-binding site is contributed by Arg21. Residue His51 participates in (6R)-5,10-methylene-5,6,7,8-tetrahydrofolate binding. 126–127 (RR) is a binding site for dUMP. Cys146 functions as the Nucleophile in the catalytic mechanism. DUMP is bound by residues 166-169 (RSCD), Asn177, and 207-209 (HLY). Asp169 contributes to the (6R)-5,10-methylene-5,6,7,8-tetrahydrofolate binding site. Ser263 lines the (6R)-5,10-methylene-5,6,7,8-tetrahydrofolate pocket.

Belongs to the thymidylate synthase family. Bacterial-type ThyA subfamily. Homodimer.

The protein localises to the cytoplasm. The catalysed reaction is dUMP + (6R)-5,10-methylene-5,6,7,8-tetrahydrofolate = 7,8-dihydrofolate + dTMP. It functions in the pathway pyrimidine metabolism; dTTP biosynthesis. In terms of biological role, catalyzes the reductive methylation of 2'-deoxyuridine-5'-monophosphate (dUMP) to 2'-deoxythymidine-5'-monophosphate (dTMP) while utilizing 5,10-methylenetetrahydrofolate (mTHF) as the methyl donor and reductant in the reaction, yielding dihydrofolate (DHF) as a by-product. This enzymatic reaction provides an intracellular de novo source of dTMP, an essential precursor for DNA biosynthesis. The polypeptide is Thymidylate synthase (Buchnera aphidicola subsp. Acyrthosiphon pisum (strain 5A)).